We begin with the raw amino-acid sequence, 390 residues long: 2-oxoisovalerate dehydrogenase subunit beta, mitochondrial (390 aa).

The transit peptide at 1–48 (MAAVAARAGGLLWLRAAGAERRRCGLRCAALVQGFLQPGGEDTAQKRR) directs the protein to the mitochondrion. Position 150 (tyrosine 150) interacts with thiamine diphosphate. The K(+) site is built by glycine 176, leucine 178, threonine 179, cysteine 226, and aspartate 229. The residue at position 230 (lysine 230) is an N6-acetyllysine. Asparagine 231 is a binding site for K(+). Residue lysine 239 is modified to N6-acetyllysine.

Heterotetramer of 2 alpha/BCKDHA and 2 beta chains/BCKDHB that forms the branched-chain alpha-keto acid decarboxylase (E1) component of the BCKD complex. The branched-chain alpha-ketoacid dehydrogenase is a large complex composed of three major building blocks E1, E2 and E3. It is organized around E2, a 24-meric cubic core composed of DBT, to which are associated 6 to 12 copies of E1, and approximately 6 copies of the dehydrogenase E3, a DLD dimer. Thiamine diphosphate serves as cofactor.

The protein localises to the mitochondrion matrix. The catalysed reaction is N(6)-[(R)-lipoyl]-L-lysyl-[protein] + 3-methyl-2-oxobutanoate + H(+) = N(6)-[(R)-S(8)-2-methylpropanoyldihydrolipoyl]-L-lysyl-[protein] + CO2. Its function is as follows. Together with BCKDHA forms the heterotetrameric E1 subunit of the mitochondrial branched-chain alpha-ketoacid dehydrogenase (BCKD) complex. The BCKD complex catalyzes the multi-step oxidative decarboxylation of alpha-ketoacids derived from the branched-chain amino-acids valine, leucine and isoleucine producing CO2 and acyl-CoA which is subsequently utilized to produce energy. The E1 subunit catalyzes the first step with the decarboxylation of the alpha-ketoacid forming an enzyme-product intermediate. A reductive acylation mediated by the lipoylamide cofactor of E2 extracts the acyl group from the E1 active site for the next step of the reaction. The protein is 2-oxoisovalerate dehydrogenase subunit beta, mitochondrial of Mus musculus (Mouse).